Reading from the N-terminus, the 216-residue chain is MIKNLSRYALVTAFALFLSGCITRTEQQPAPVDEAKPGTEQPAQPTQPVPTVPSVPTVPAQPGPIEHPDQTSQPAPRVRHYDWNGAMQPMVGKMLQAQGVTAGSVLLVDSVNNRTNGTLNAGEATETLRNALANNGKFTLVSAQQLAVAKQQLGLSPQDSLGSRSKAMGIARNVGAQYVLYSNATGNVNTPALQMQLMLVQTGEIIWSGKGAVSQQ.

Residues 1–20 form the signal peptide; it reads MIKNLSRYALVTAFALFLSG. Cysteine 21 carries the N-palmitoyl cysteine lipid modification. Cysteine 21 carries S-diacylglycerol cysteine lipidation. Positions 28–77 are disordered; sequence QPAPVDEAKPGTEQPAQPTQPVPTVPSVPTVPAQPGPIEHPDQTSQPAPR.

Belongs to the LpoB family. Interacts with PBP1b.

It localises to the cell outer membrane. In terms of biological role, regulator of peptidoglycan synthesis that is essential for the function of penicillin-binding protein 1B (PBP1b). The polypeptide is Penicillin-binding protein activator LpoB (Enterobacter sp. (strain 638)).